A 353-amino-acid polypeptide reads, in one-letter code: Phenol 2-monooxygenase, reductase component DmpP (353 aa).

A 2Fe-2S ferredoxin-type domain is found at 3–93 (YNVTIEPTGE…DLVIEADVDA (91 aa)). 4 residues coordinate [2Fe-2S] cluster: Cys37, Cys42, Cys45, and Cys77. In terms of domain architecture, FAD-binding FR-type spans 102-201 (VEDYRGVVSA…SGPYGQFFVR (100 aa)).

In terms of assembly, the multicomponent enzyme phenol hydroxylase is formed by DmpL (P1 component), DmpM (P2 component), DmpN (P3 component), DmpO (P4 component) and DmpP (P5 component). Requires FAD as cofactor. [2Fe-2S] cluster is required as a cofactor.

It carries out the reaction phenol + NADH + O2 + H(+) = catechol + NAD(+) + H2O. It functions in the pathway aromatic compound metabolism; phenol degradation. Part of a multicomponent enzyme which catalyzes the degradation of phenol and some of its methylated derivatives. DmpP probably transfers electrons from NADH, via FAD and the iron-sulfur center, to the oxygenase component of the complex. Required for growth on phenol and for in vitro phenol hydroxylase activity. This is Phenol 2-monooxygenase, reductase component DmpP from Pseudomonas sp. (strain CF600).